The primary structure comprises 509 residues: Seipin-3 (509 aa).

The tract at residues 33-73 is disordered; sequence YDCLNSSPPANLRRRRLPMDTDSSSSSSTSSLESCEKRSTV. Low complexity predominate over residues 52 to 63; it reads DTDSSSSSSTSS. A run of 2 helical transmembrane segments spans residues 238–258 and 455–475; these read LFCA…AFMI and LFVW…LVFF.

This sequence belongs to the seipin family. In terms of tissue distribution, expressed in seeds, seedlings, leaves, stems and roots. Not detected in flowers.

It is found in the endoplasmic reticulum membrane. Its function is as follows. Involved in lipid metabolism and lipid droplet (LD) morphology, number, and size. Supports the formation of small-sized LDs and modulates triacylglycerol accumulation. Induces probably a reorganization of the endoplasmic reticulum into LD-forming domains. The chain is Seipin-3 from Arabidopsis thaliana (Mouse-ear cress).